Consider the following 326-residue polypeptide: DNA-directed RNA polymerase subunit alpha (326 aa).

Residues 1–230 form an alpha N-terminal domain (alpha-NTD) region; that stretch reads MLKIEKQAKA…LHLDPFLEIG (230 aa). Residues 249–326 are alpha C-terminal domain (alpha-CTD); it reads DIQVIDDKSH…YDLEKNGSPE (78 aa).

The protein belongs to the RNA polymerase alpha chain family. Homodimer. The RNAP catalytic core consists of 2 alpha, 1 beta, 1 beta' and 1 omega subunit. When a sigma factor is associated with the core the holoenzyme is formed, which can initiate transcription.

It catalyses the reaction RNA(n) + a ribonucleoside 5'-triphosphate = RNA(n+1) + diphosphate. DNA-dependent RNA polymerase catalyzes the transcription of DNA into RNA using the four ribonucleoside triphosphates as substrates. The protein is DNA-directed RNA polymerase subunit alpha of Fusobacterium nucleatum subsp. nucleatum (strain ATCC 25586 / DSM 15643 / BCRC 10681 / CIP 101130 / JCM 8532 / KCTC 2640 / LMG 13131 / VPI 4355).